We begin with the raw amino-acid sequence, 304 residues long: Bifunctional protein FolD 3 (304 aa).

NADP(+) contacts are provided by residues G172–S174, S197, and I238.

It belongs to the tetrahydrofolate dehydrogenase/cyclohydrolase family. As to quaternary structure, homodimer.

It catalyses the reaction (6R)-5,10-methylene-5,6,7,8-tetrahydrofolate + NADP(+) = (6R)-5,10-methenyltetrahydrofolate + NADPH. It carries out the reaction (6R)-5,10-methenyltetrahydrofolate + H2O = (6R)-10-formyltetrahydrofolate + H(+). It participates in one-carbon metabolism; tetrahydrofolate interconversion. Functionally, catalyzes the oxidation of 5,10-methylenetetrahydrofolate to 5,10-methenyltetrahydrofolate and then the hydrolysis of 5,10-methenyltetrahydrofolate to 10-formyltetrahydrofolate. The sequence is that of Bifunctional protein FolD 3 from Rhizorhabdus wittichii (strain DSM 6014 / CCUG 31198 / JCM 15750 / NBRC 105917 / EY 4224 / RW1) (Sphingomonas wittichii).